The sequence spans 202 residues: 3-isopropylmalate dehydratase small subunit (202 aa).

This sequence belongs to the LeuD family. LeuD type 1 subfamily. In terms of assembly, heterodimer of LeuC and LeuD.

It carries out the reaction (2R,3S)-3-isopropylmalate = (2S)-2-isopropylmalate. The protein operates within amino-acid biosynthesis; L-leucine biosynthesis; L-leucine from 3-methyl-2-oxobutanoate: step 2/4. Its function is as follows. Catalyzes the isomerization between 2-isopropylmalate and 3-isopropylmalate, via the formation of 2-isopropylmaleate. This is 3-isopropylmalate dehydratase small subunit from Blochmanniella pennsylvanica (strain BPEN).